The primary structure comprises 509 residues: Ribonuclease Y (509 aa).

The chain crosses the membrane as a helical span at residues 3-23; it reads WILYVILPAVCIILGWTIRWL. The region spanning 199-284 is the KH domain; that stretch reads TVSTVSLPSD…EIVQKVTREI (86 aa). The 94-residue stretch at 325–418 folds into the HD domain; that stretch reads VLQHSKEVAI…VQIADAISAA (94 aa).

It belongs to the RNase Y family.

The protein resides in the cell membrane. Endoribonuclease that initiates mRNA decay. This is Ribonuclease Y from Treponema denticola (strain ATCC 35405 / DSM 14222 / CIP 103919 / JCM 8153 / KCTC 15104).